The sequence spans 426 residues: Pregnancy-specific beta-1-glycoprotein 9 (426 aa).

A signal peptide spans 1–34 (MGPLPAPSCTQRITWKGLLLTASLLNFWNPPTTA). Residues 35 to 144 (EVTIEAQPPK…IRHFTFTLYL (110 aa)) form the Ig-like V-type domain. N-linked (GlcNAc...) asparagine glycans are attached at residues asparagine 104 and asparagine 111. Positions 127–129 (RGD) match the Cell attachment site motif. Ig-like C2-type domains lie at 147–234 (PKPY…VTLN), 242–326 (PYIT…PVIL), and 335–410 (PRIY…KSMT). Cystine bridges form between cysteine 169–cysteine 217, cysteine 262–cysteine 310, and cysteine 354–cysteine 394. N-linked (GlcNAc...) asparagine glycans are attached at residues asparagine 199, asparagine 268, asparagine 303, and asparagine 387.

Belongs to the immunoglobulin superfamily. CEA family. Interacts with latency-associated peptide; leading to TGFB1 activation.

The protein localises to the secreted. Binds to the small latent transforming growth factor-beta complex, consisting of the N-terminal TGFB1 latency-associated peptide (LAP) and the mature form of TGFB1, thereby leading to the activation of TGFB1. The activation of TGFB1 leads to stimulation of naive CD4(+) T-cells to increase FoxP3 expression and to an increase in the number of FoxP3(+) regulatory T-cells. Induces the differentiation of a suppressive CD4(+)LAP(+)FoxP3(-) T-cell subset. Induces the secretion of TGFB1 in macrophages, but not in activated CD4(+) T-cells. May reduce the expression of several pro-inflammatory cytokines and chemokines by CD4(+) T-cells, including IL2 and IL6. The chain is Pregnancy-specific beta-1-glycoprotein 9 (PSG9) from Homo sapiens (Human).